The chain runs to 275 residues: Polyamine aminopropyltransferase (275 aa).

The region spanning 2 to 235 (EFWFTEKQTE…GMWTFTIGSK (234 aa)) is the PABS domain. Position 31 (Gln31) interacts with S-methyl-5'-thioadenosine. Spermidine contacts are provided by His62 and Asp86. S-methyl-5'-thioadenosine-binding positions include Asp106 and 137-138 (DG). Asp155 serves as the catalytic Proton acceptor. Spermidine is bound at residue 155–158 (DSTE). S-methyl-5'-thioadenosine is bound at residue Pro162.

This sequence belongs to the spermidine/spermine synthase family. Homodimer or homotetramer.

The protein resides in the cytoplasm. The catalysed reaction is S-adenosyl 3-(methylsulfanyl)propylamine + putrescine = S-methyl-5'-thioadenosine + spermidine + H(+). It participates in amine and polyamine biosynthesis; spermidine biosynthesis; spermidine from putrescine: step 1/1. Its function is as follows. Catalyzes the irreversible transfer of a propylamine group from the amino donor S-adenosylmethioninamine (decarboxy-AdoMet) to putrescine (1,4-diaminobutane) to yield spermidine. This Shouchella clausii (strain KSM-K16) (Alkalihalobacillus clausii) protein is Polyamine aminopropyltransferase.